Consider the following 426-residue polypeptide: Dihydroorotase (426 aa).

Residues His-58 and His-60 each coordinate Zn(2+). Substrate contacts are provided by residues 60–62 and Asn-92; that span reads HLR. Zn(2+) contacts are provided by Asp-150, His-177, and His-230. Asn-276 is a binding site for substrate. Asp-303 is a binding site for Zn(2+). Residue Asp-303 is part of the active site. Substrate is bound by residues His-307 and 321-322; that span reads FG.

It belongs to the metallo-dependent hydrolases superfamily. DHOase family. Class I DHOase subfamily. Zn(2+) is required as a cofactor.

The enzyme catalyses (S)-dihydroorotate + H2O = N-carbamoyl-L-aspartate + H(+). Its pathway is pyrimidine metabolism; UMP biosynthesis via de novo pathway; (S)-dihydroorotate from bicarbonate: step 3/3. Functionally, catalyzes the reversible cyclization of carbamoyl aspartate to dihydroorotate. This chain is Dihydroorotase, found in Listeria monocytogenes serotype 4b (strain F2365).